A 253-amino-acid polypeptide reads, in one-letter code: RAD51-associated protein 1 (253 aa).

Positions 32–51 (APLTKKSRTQPKEPKKENKK) are interaction with DNA. 3 disordered regions span residues 33-74 (PLTK…TSLD), 141-169 (DREH…EGND), and 184-244 (KKIK…WVPP). Residues 154 to 169 (PDEESEEDSDYREGND) show a composition bias toward acidic residues. Basic residues predominate over residues 184-195 (KKIKRQTRKEKK). Positions 190–241 (TRKEKKTPKSENNTTVMELKSEQTQKMMSTSSEPVGRPLYTSSPVTNKKPKW) are interaction with DNA. Polar residues predominate over residues 199-222 (SENNTTVMELKSEQTQKMMSTSSE).

In terms of assembly, monomer.

Its subcellular location is the chromosome. The protein resides in the nucleus. Functionally, structure-specific DNA-binding protein involved in DNA repair by promoting RAD51-mediated homologous recombination. Acts by stimulating D-Loop formation by RAD51: specifically enhances joint molecule formation through its structure-specific DNA interaction and its interaction with RAD51. Binds single-stranded DNA (ssDNA), double-stranded DNA (dsDNA) and secondary DNA structures, such as D-loop structures: has a strong preference for branched-DNA structures that are obligatory intermediates during joint molecule formation. Involved in mitotic recombination-dependent replication fork processing. Also involved in meiosis by promoting DMC1-mediated homologous meiotic recombination. The sequence is that of RAD51-associated protein 1 from Gallus gallus (Chicken).